The sequence spans 350 residues: Protein RecA (350 aa).

ATP is bound at residue 65 to 72; that stretch reads GPESSGKT.

This sequence belongs to the RecA family.

The protein localises to the cytoplasm. In terms of biological role, can catalyze the hydrolysis of ATP in the presence of single-stranded DNA, the ATP-dependent uptake of single-stranded DNA by duplex DNA, and the ATP-dependent hybridization of homologous single-stranded DNAs. It interacts with LexA causing its activation and leading to its autocatalytic cleavage. The polypeptide is Protein RecA (Clostridium tetani (strain Massachusetts / E88)).